The chain runs to 333 residues: Anthranilate phosphoribosyltransferase (333 aa).

Residues G78, 81–82 (GD), T86, 88–91 (NVST), 106–114 (KHGNYSVSS), and S118 each bind 5-phospho-alpha-D-ribose 1-diphosphate. G78 is an anthranilate binding site. Residue S90 participates in Mg(2+) binding. N109 contacts anthranilate. R164 serves as a coordination point for anthranilate. D222 and E223 together coordinate Mg(2+).

The protein belongs to the anthranilate phosphoribosyltransferase family. In terms of assembly, homodimer. Mg(2+) serves as cofactor.

It carries out the reaction N-(5-phospho-beta-D-ribosyl)anthranilate + diphosphate = 5-phospho-alpha-D-ribose 1-diphosphate + anthranilate. It functions in the pathway amino-acid biosynthesis; L-tryptophan biosynthesis; L-tryptophan from chorismate: step 2/5. Its function is as follows. Catalyzes the transfer of the phosphoribosyl group of 5-phosphorylribose-1-pyrophosphate (PRPP) to anthranilate to yield N-(5'-phosphoribosyl)-anthranilate (PRA). The chain is Anthranilate phosphoribosyltransferase from Natronomonas pharaonis (strain ATCC 35678 / DSM 2160 / CIP 103997 / JCM 8858 / NBRC 14720 / NCIMB 2260 / Gabara) (Halobacterium pharaonis).